A 145-amino-acid chain; its full sequence is D-aminoacyl-tRNA deacylase (145 aa).

Positions 137-138 (GP) match the Gly-cisPro motif, important for rejection of L-amino acids motif.

Belongs to the DTD family. Homodimer.

It is found in the cytoplasm. The enzyme catalyses glycyl-tRNA(Ala) + H2O = tRNA(Ala) + glycine + H(+). It catalyses the reaction a D-aminoacyl-tRNA + H2O = a tRNA + a D-alpha-amino acid + H(+). An aminoacyl-tRNA editing enzyme that deacylates mischarged D-aminoacyl-tRNAs. Also deacylates mischarged glycyl-tRNA(Ala), protecting cells against glycine mischarging by AlaRS. Acts via tRNA-based rather than protein-based catalysis; rejects L-amino acids rather than detecting D-amino acids in the active site. By recycling D-aminoacyl-tRNA to D-amino acids and free tRNA molecules, this enzyme counteracts the toxicity associated with the formation of D-aminoacyl-tRNA entities in vivo and helps enforce protein L-homochirality. This is D-aminoacyl-tRNA deacylase from Proteus mirabilis (strain HI4320).